Consider the following 242-residue polypeptide: ATP synthase subunit a (242 aa).

Transmembrane regions (helical) follow at residues 28-48 (LHGQ…LLVV), 89-109 (LPFV…GALI), 128-148 (INTT…AGLS), 193-213 (LVVA…AMFL), and 214-234 (GLFT…NYIG).

It belongs to the ATPase A chain family. As to quaternary structure, F-type ATPases have 2 components, CF(1) - the catalytic core - and CF(0) - the membrane proton channel. CF(1) has five subunits: alpha(3), beta(3), gamma(1), delta(1), epsilon(1). CF(0) has four main subunits: a, b, b' and c.

It localises to the cellular thylakoid membrane. Functionally, key component of the proton channel; it plays a direct role in the translocation of protons across the membrane. The protein is ATP synthase subunit a of Synechococcus sp. (strain WH7803).